The sequence spans 230 residues: UPF0494 membrane protein C1348.07 (230 aa).

3 helical membrane passes run 78 to 98 (WPLLIIWCILIVFAIDKNFEV), 120 to 140 (IWGPIAIYICLFILLLLGLIY), and 148 to 168 (AIPLISIVIAAVVVIIAVAMV).

Belongs to the UPF0494 family.

It is found in the vacuole. It localises to the membrane. This Schizosaccharomyces pombe (strain 972 / ATCC 24843) (Fission yeast) protein is UPF0494 membrane protein C1348.07.